A 291-amino-acid polypeptide reads, in one-letter code: ATP synthase gamma chain (291 aa).

The protein belongs to the ATPase gamma chain family. As to quaternary structure, F-type ATPases have 2 components, CF(1) - the catalytic core - and CF(0) - the membrane proton channel. CF(1) has five subunits: alpha(3), beta(3), gamma(1), delta(1), epsilon(1). CF(0) has three main subunits: a, b and c.

It localises to the cell inner membrane. Produces ATP from ADP in the presence of a proton gradient across the membrane. The gamma chain is believed to be important in regulating ATPase activity and the flow of protons through the CF(0) complex. This is ATP synthase gamma chain from Aquifex aeolicus (strain VF5).